A 394-amino-acid chain; its full sequence is Tubulin-like protein CetZ5 (394 aa).

Residues 10–14 (QAGGN), 110–112 (GTG), E142, N169, and N187 each bind GTP.

It belongs to the CetZ family.

It is found in the cytoplasm. Involved in cell shape control. The protein is Tubulin-like protein CetZ5 of Haloferax volcanii (strain ATCC 29605 / DSM 3757 / JCM 8879 / NBRC 14742 / NCIMB 2012 / VKM B-1768 / DS2) (Halobacterium volcanii).